The chain runs to 986 residues: Bifunctional glutamine synthetase adenylyltransferase/adenylyl-removing enzyme (986 aa).

Residues 1–482 (MVTTVISNVK…RYGRLFAGEE (482 aa)) form an adenylyl removase region. An adenylyl transferase region spans residues 486 to 986 (SRFGSLVFTG…RAAYEAVVKG (501 aa)).

The protein belongs to the GlnE family. Requires Mg(2+) as cofactor.

The enzyme catalyses [glutamine synthetase]-O(4)-(5'-adenylyl)-L-tyrosine + phosphate = [glutamine synthetase]-L-tyrosine + ADP. It carries out the reaction [glutamine synthetase]-L-tyrosine + ATP = [glutamine synthetase]-O(4)-(5'-adenylyl)-L-tyrosine + diphosphate. Its function is as follows. Involved in the regulation of glutamine synthetase GlnA, a key enzyme in the process to assimilate ammonia. When cellular nitrogen levels are high, the C-terminal adenylyl transferase (AT) inactivates GlnA by covalent transfer of an adenylyl group from ATP to specific tyrosine residue of GlnA, thus reducing its activity. Conversely, when nitrogen levels are low, the N-terminal adenylyl removase (AR) activates GlnA by removing the adenylyl group by phosphorolysis, increasing its activity. The regulatory region of GlnE binds the signal transduction protein PII (GlnB) which indicates the nitrogen status of the cell. This Caulobacter vibrioides (strain ATCC 19089 / CIP 103742 / CB 15) (Caulobacter crescentus) protein is Bifunctional glutamine synthetase adenylyltransferase/adenylyl-removing enzyme.